Reading from the N-terminus, the 218-residue chain is Ras-related protein Rab11D (218 aa).

GTP is bound at residue 20 to 27 (GDSGVGKS). An Effector region motif is present at residues 42 to 50 (SKSTIGVEF). GTP-binding positions include 68 to 72 (DTAGQ) and 126 to 129 (NKSD). S-geranylgeranyl cysteine attachment occurs at residues Cys215 and Cys216.

It belongs to the small GTPase superfamily. Rab family.

The protein resides in the cell membrane. In Lotus japonicus (Lotus corniculatus var. japonicus), this protein is Ras-related protein Rab11D (RAB11D).